The chain runs to 668 residues: Echinocandin B biosynthetic cluster protein J (668 aa).

5 disordered regions span residues 1–20 (MHFAESVQTPPPSRPSDQSL), 92–113 (YTPPSLDSRSSATPPQNLPPTP), 224–322 (PLDH…QSAD), 330–349 (EVAEPAPPSPSTRWTHSIPT), and 483–506 (NCSSSSCSSSASKKNEEKREPPLK). The span at 96-106 (SLDSRSSATPP) shows a compositional bias: polar residues. Over residues 264–275 (NPEPGTPTPPSP) the composition is skewed to pro residues. The span at 311–322 (YRSTPSPCQSAD) shows a compositional bias: polar residues. The span at 484 to 494 (CSSSSCSSSAS) shows a compositional bias: low complexity. The span at 495–505 (KKNEEKREPPL) shows a compositional bias: basic and acidic residues.

Its pathway is antifungal biosynthesis. Functionally, part of the gene cluster that mediates the biosynthesis of echinocandin B, a fungal lipidated cyclic hexapeptide that acts as an antifungal agent. Linoleoyl-AMP, produced by the fatty-acyl-AMP ligase ecdI, is transferred to the initiation carrier domain (T0) of ecdA. The linoleoyl-S-phosphopantetheinyl-T0 is sequentially extended with L-ornithine, L-threonine, L-proline, L-homotyrosine, L-threonine, and 4R-methyl-L-proline to form the linear hexapeptide. Thereafter, the terminal condensation (C7) performs macrocyclization of the NRPS product and the cyclic scaffold is released from ecdA. All six of the amino acid residues are hydroxylated, including 4R,5R-dihydroxy-L-ornithine, 4R-hydroxyl-L-proline, 3S,4S-dihydroxy-L-homotyrosine, and 3S-hydroxyl-4S-methyl-L-prolin. In the pathway, all the hydroxylation reactions are proposed to occur following completion of the cyclic peptide, so the unhydroxylated precursor produced by ecdA will undergo six rounds of hydroxylation. Five hydroxylase genes (ecdG, ecdH, ecdK, htyE and htyF) are embedded within the echinocandin B (ecd) and L-homotyrosine (hty) clusters. This chain is Echinocandin B biosynthetic cluster protein J, found in Aspergillus rugulosus (Emericella rugulosa).